The sequence spans 340 residues: S-adenosylmethionine:tRNA ribosyltransferase-isomerase (340 aa).

It belongs to the QueA family. As to quaternary structure, monomer.

It localises to the cytoplasm. It catalyses the reaction 7-aminomethyl-7-carbaguanosine(34) in tRNA + S-adenosyl-L-methionine = epoxyqueuosine(34) in tRNA + adenine + L-methionine + 2 H(+). Its pathway is tRNA modification; tRNA-queuosine biosynthesis. In terms of biological role, transfers and isomerizes the ribose moiety from AdoMet to the 7-aminomethyl group of 7-deazaguanine (preQ1-tRNA) to give epoxyqueuosine (oQ-tRNA). This Chromobacterium violaceum (strain ATCC 12472 / DSM 30191 / JCM 1249 / CCUG 213 / NBRC 12614 / NCIMB 9131 / NCTC 9757 / MK) protein is S-adenosylmethionine:tRNA ribosyltransferase-isomerase.